The chain runs to 272 residues: Undecaprenyl-diphosphatase (272 aa).

8 consecutive transmembrane segments (helical) span residues 1 to 21 (MSTL…FLPI), 39 to 59 (QGLA…MMYF), 91 to 111 (WWIL…KDFI), 117 to 137 (SALV…FADI), 151 to 171 (LGLK…IPGT), 196 to 216 (FLLS…KLIL), 228 to 248 (LGSL…LILL), and 251 to 271 (LGMM…LWFI).

This sequence belongs to the UppP family.

It localises to the cell inner membrane. The enzyme catalyses di-trans,octa-cis-undecaprenyl diphosphate + H2O = di-trans,octa-cis-undecaprenyl phosphate + phosphate + H(+). In terms of biological role, catalyzes the dephosphorylation of undecaprenyl diphosphate (UPP). Confers resistance to bacitracin. The sequence is that of Undecaprenyl-diphosphatase from Colwellia psychrerythraea (strain 34H / ATCC BAA-681) (Vibrio psychroerythus).